The following is a 113-amino-acid chain: Large ribosomal subunit protein bL19 (113 aa).

This sequence belongs to the bacterial ribosomal protein bL19 family.

Its function is as follows. This protein is located at the 30S-50S ribosomal subunit interface and may play a role in the structure and function of the aminoacyl-tRNA binding site. This chain is Large ribosomal subunit protein bL19 (rplS), found in Mycobacterium bovis (strain ATCC BAA-935 / AF2122/97).